A 67-amino-acid polypeptide reads, in one-letter code: ATP synthase F(0) complex subunit 8 (67 aa).

The helical transmembrane segment at 8-24 threads the bilayer; that stretch reads TWFIMIFSMFLTLFILF. K54 is modified (N6-acetyllysine; alternate). K54 carries the N6-succinyllysine; alternate modification. An N6-acetyllysine modification is found at K57.

Belongs to the ATPase protein 8 family. As to quaternary structure, component of the ATP synthase complex composed at least of ATP5F1A/subunit alpha, ATP5F1B/subunit beta, ATP5MC1/subunit c (homooctomer), MT-ATP6/subunit a, MT-ATP8/subunit 8, ATP5ME/subunit e, ATP5MF/subunit f, ATP5MG/subunit g, ATP5MK/subunit k, ATP5MJ/subunit j, ATP5F1C/subunit gamma, ATP5F1D/subunit delta, ATP5F1E/subunit epsilon, ATP5PF/subunit F6, ATP5PB/subunit b, ATP5PD/subunit d, ATP5PO/subunit OSCP. ATP synthase complex consists of a soluble F(1) head domain (subunits alpha(3) and beta(3)) - the catalytic core - and a membrane F(0) domain - the membrane proton channel (subunits c, a, 8, e, f, g, k and j). These two domains are linked by a central stalk (subunits gamma, delta, and epsilon) rotating inside the F1 region and a stationary peripheral stalk (subunits F6, b, d, and OSCP). Interacts with PRICKLE3.

Its subcellular location is the mitochondrion membrane. In terms of biological role, subunit 8, of the mitochondrial membrane ATP synthase complex (F(1)F(0) ATP synthase or Complex V) that produces ATP from ADP in the presence of a proton gradient across the membrane which is generated by electron transport complexes of the respiratory chain. ATP synthase complex consist of a soluble F(1) head domain - the catalytic core - and a membrane F(1) domain - the membrane proton channel. These two domains are linked by a central stalk rotating inside the F(1) region and a stationary peripheral stalk. During catalysis, ATP synthesis in the catalytic domain of F(1) is coupled via a rotary mechanism of the central stalk subunits to proton translocation. In vivo, can only synthesize ATP although its ATP hydrolase activity can be activated artificially in vitro. Part of the complex F(0) domain. This chain is ATP synthase F(0) complex subunit 8, found in Canis lupus familiaris (Dog).